Here is a 1347-residue protein sequence, read N- to C-terminus: Probable serine/threonine-protein kinase DDB_G0288147 (1347 aa).

A Phorbol-ester/DAG-type zinc finger spans residues 12 to 67 (NHRFEPYTLKHLTICKRCEKEIIGVSNSAQICYSCKNIYHTRCCKEIETKKLELIC). Disordered regions lie at residues 262-316 (PFNE…LNES), 333-402 (SNNS…KSSK), and 463-485 (DNNN…NNNN). Residues 271-282 (DSTLSASTYNRR) show a composition bias toward polar residues. 3 stretches are compositionally biased toward low complexity: residues 286–316 (KNKN…LNES), 333–342 (SNNSNNLAAL), and 350–361 (TTTTTTTTTTTT). Basic residues-rich tracts occupy residues 366-382 (NNHH…KSRK) and 389-402 (NKKK…KSSK). Low complexity predominate over residues 464-485 (NNNNNNNNNNNNNNNSNNNNNN). The 256-residue stretch at 599–854 (VKINVEIYDS…EILKVFYSLL (256 aa)) folds into the Protein kinase domain. Residues 605–613 (IYDSPLCTV) and Lys-626 contribute to the ATP site. Residue Asp-724 is the Proton acceptor of the active site. 2 disordered regions span residues 937 to 1241 (SERK…IVNP) and 1282 to 1310 (SSDS…IRSP). The segment covering 976-986 (IIDDDDDDDDD) has biased composition (acidic residues). 2 stretches are compositionally biased toward low complexity: residues 1004–1015 (NINSENKNNNNV) and 1024–1062 (SSNS…NNNN). Polar residues-rich tracts occupy residues 1063–1083 (LRQN…NQLM) and 1118–1127 (LSSSQTSEIG). Low complexity-rich tracts occupy residues 1128–1241 (DNNT…IVNP) and 1282–1291 (SSDSSNSLSD).

The protein belongs to the protein kinase superfamily. TKL Ser/Thr protein kinase family.

The catalysed reaction is L-seryl-[protein] + ATP = O-phospho-L-seryl-[protein] + ADP + H(+). It carries out the reaction L-threonyl-[protein] + ATP = O-phospho-L-threonyl-[protein] + ADP + H(+). This Dictyostelium discoideum (Social amoeba) protein is Probable serine/threonine-protein kinase DDB_G0288147.